The sequence spans 684 residues: Ski-like protein (684 aa).

Residues Lys-50 and Lys-70 each participate in a glycyl lysine isopeptide (Lys-Gly) (interchain with G-Cter in SUMO2) cross-link. The interval 420–454 (SQSKELTKTEASKSISRQSEKAHSSGKLQKTVSYP) is disordered. Ser-452 is modified (phosphoserine). Residues Lys-489 and Lys-527 each participate in a glycyl lysine isopeptide (Lys-Gly) (interchain with G-Cter in SUMO2) cross-link. Residues 536–684 (RTYLKQQEKL…ILKSSKTAKE (149 aa)) adopt a coiled-coil conformation.

It belongs to the SKI family. As to quaternary structure, interacts with CPNE4 (via VWFA domain). Interacts with SMAD2, SMAD3 and RNF111. Isoform 1 interacts with WWP1. In terms of processing, ubiquitinated by RNF111 and ARK2C, promoting proteasomal degradation, leading to enhance the BMP-Smad signaling. Isoform SNON and isoform SNOA are widely expressed. Highest expression is found in skeletal muscle, followed by placenta and lung. Lowest expression in heart, brain and pancreas. Isoform SNOI expression is restricted to skeletal muscle.

In terms of biological role, may have regulatory role in cell division or differentiation in response to extracellular signals. This chain is Ski-like protein (SKIL), found in Homo sapiens (Human).